The chain runs to 943 residues: U3 small nucleolar RNA-associated protein 12 (943 aa).

WD repeat units follow at residues alanine 77–aspartate 107, glycine 119–aspartate 149, serine 161–aspartate 190, alanine 202–lysine 230, glycine 389–asparagine 418, phenylalanine 428–aspartate 458, alanine 471–aspartate 501, glycine 571–glycine 601, alanine 613–aspartate 643, and alanine 655–glutamate 685. Residues glutamate 715–histidine 739 form a disordered region.

The protein belongs to the WD repeat WDR3/UTP12 family. In terms of assembly, interacts with snoRNA U3. Interacts with MPP10. Component of the ribosomal small subunit (SSU) processome composed of at least 40 protein subunits and snoRNA U3.

It is found in the nucleus. It localises to the nucleolus. In terms of biological role, involved in nucleolar processing of pre-18S ribosomal RNA. In Saccharomyces cerevisiae (strain ATCC 204508 / S288c) (Baker's yeast), this protein is U3 small nucleolar RNA-associated protein 12 (DIP2).